The following is a 194-amino-acid chain: Imidazole glycerol phosphate synthase subunit HisH (194 aa).

Residues 1–194 (MIIIDTGCAN…QLLKNFVENL (194 aa)) form the Glutamine amidotransferase type-1 domain. C75 functions as the Nucleophile in the catalytic mechanism. Active-site residues include H175 and E177.

As to quaternary structure, heterodimer of HisH and HisF.

It localises to the cytoplasm. The enzyme catalyses 5-[(5-phospho-1-deoxy-D-ribulos-1-ylimino)methylamino]-1-(5-phospho-beta-D-ribosyl)imidazole-4-carboxamide + L-glutamine = D-erythro-1-(imidazol-4-yl)glycerol 3-phosphate + 5-amino-1-(5-phospho-beta-D-ribosyl)imidazole-4-carboxamide + L-glutamate + H(+). It carries out the reaction L-glutamine + H2O = L-glutamate + NH4(+). It functions in the pathway amino-acid biosynthesis; L-histidine biosynthesis; L-histidine from 5-phospho-alpha-D-ribose 1-diphosphate: step 5/9. IGPS catalyzes the conversion of PRFAR and glutamine to IGP, AICAR and glutamate. The HisH subunit catalyzes the hydrolysis of glutamine to glutamate and ammonia as part of the synthesis of IGP and AICAR. The resulting ammonia molecule is channeled to the active site of HisF. The sequence is that of Imidazole glycerol phosphate synthase subunit HisH from Mannheimia succiniciproducens (strain KCTC 0769BP / MBEL55E).